A 318-amino-acid polypeptide reads, in one-letter code: Porphobilinogen deaminase (318 aa).

At Cys248 the chain carries S-(dipyrrolylmethanemethyl)cysteine.

Belongs to the HMBS family. In terms of assembly, monomer. It depends on dipyrromethane as a cofactor.

The enzyme catalyses 4 porphobilinogen + H2O = hydroxymethylbilane + 4 NH4(+). It participates in porphyrin-containing compound metabolism; protoporphyrin-IX biosynthesis; coproporphyrinogen-III from 5-aminolevulinate: step 2/4. Its function is as follows. Tetrapolymerization of the monopyrrole PBG into the hydroxymethylbilane pre-uroporphyrinogen in several discrete steps. The protein is Porphobilinogen deaminase of Caulobacter sp. (strain K31).